Consider the following 511-residue polypeptide: uncharacterized protein (511 aa).

The region spanning 13 to 45 is the LisH domain; the sequence is IYDALNMLVYDYLLKMKYEGSAKIFFNEAGLEN. Residues 172–212 form a disordered region; the sequence is PRFEEQGVPPAKMAPKQFRDEGRSGNVESPSIATNQEGSSP. Positions 197 to 210 are enriched in polar residues; the sequence is NVESPSIATNQEGS.

This is an uncharacterized protein from Encephalitozoon cuniculi (strain GB-M1) (Microsporidian parasite).